The chain runs to 417 residues: GTP-binding protein YPT11 (417 aa).

Residues 1–34 are disordered; sequence MSQRKRYSLNVVTSPSIPSPTPSAPIRTNESNWE. Residues 97–104, 228–232, and 292–295 each bind GTP; these read GDANVGKT, DTAGQ, and NKID. 2 S-geranylgeranyl cysteine lipidation sites follow: cysteine 415 and cysteine 416.

Belongs to the small GTPase superfamily. Rab family. In terms of assembly, interacts with MYO2 (via C-terminal tail domain). Interacts with YIF1, YIP3, YIP4 and YIP5.

It is found in the endoplasmic reticulum membrane. The protein localises to the bud tip. It localises to the bud neck. In terms of biological role, involved in the positive control of both endoplasmic reticulum (ER) and mitochondrion inheritance during cell divison. Required for the MYO2-dependent retention of newly inherited mitochondria at the bud tip in developing daughter cells. The chain is GTP-binding protein YPT11 (YPT11) from Saccharomyces cerevisiae (strain AWRI1631) (Baker's yeast).